Reading from the N-terminus, the 247-residue chain is MEKSTLLSAVLKHRDALASVAEFLRILAGICWTLNYFSMLRTSQKDKIPSTGIFPLCNDIGWEFIYAFIYPKASAHWEGGVRVWFLVHCIVIFFIIKNAHNEWDYFPLIQRNLYFLYGIVTIGFAIGQYSFAREVGPDLGFFYGGVLCQTLASLGPIAQILSRNSTRGASLLLRAVATFGGFIKLTIYYLTGNAAGPWFESPMCKFYIGLTLILDFTYPICYYVIRRQELVNDEGDKKKKTKSGKAA.

A run of 5 helical transmembrane segments spans residues 20–40, 51–71, 76–96, 112–132, and 141–161; these read VAEFLRILAGICWTLNYFSML, TGIFPLCNDIGWEFIYAFIYP, HWEGGVRVWFLVHCIVIFFII, NLYFLYGIVTIGFAIGQYSFA, and FFYGGVLCQTLASLGPIAQIL. Asn164 carries an N-linked (GlcNAc...) asparagine glycan. The next 2 helical transmembrane spans lie at 179–199 and 205–225; these read FGGFIKLTIYYLTGNAAGPWF and KFYIGLTLILDFTYPICYYVI.

This sequence belongs to the paxB family.

It is found in the membrane. It participates in secondary metabolite biosynthesis; terpenoid biosynthesis. In terms of biological role, terpene cyclase; part of the gene cluster that mediates the biosynthesis of andrastins, meroterpenoid compounds that exhibit inhibitory activity against ras farnesyltransferase, suggesting that they could be promising leads for antitumor agents. The first step of the pathway is the synthesis of 3,5-dimethylorsellinic acid (DMOA) by the polyketide synthase adrD via condensation of one acetyl-CoA starter unit with 3 malonyl-CoA units and 2 methylations. DMAO is then converted to farnesyl-DMAO by the prenyltransferase adrG. The methyltransferase adrK catalyzes the methylation of the carboxyl group of farnesyl-DMAO to farnesyl-DMAO methyl ester which is further converted to epoxyfarnesyl-DMAO methyl ester by the FAD-dependent monooxygenase adrH. The terpene cyclase adrI then catalyzes the carbon skeletal rearrangement to generate the andrastin E, the first compound in the pathway having the andrastin scaffold, with the tetracyclic ring system. The post-cyclization tailoring enzymes adrF, adrE, adrJ, and adrA, are involved in the conversion of andrastin E into andrastin A. The short chain dehydrogenase adrF is responsible for the oxidation of the C-3 a hydroxyl group of andrastin E to yield the corresponding ketone, andrastin D. The ketoreductase adrE stereoselectively reduces the carbonyl moiety to reverse the stereochemistry of the C-3 position to yield andrastin F. The acetyltransferase adrJ is the acetyltransferase that attaches the acetyl group to the C-3 hydroxyl group of andrastin F to yield andrastin C. Finally, the cytochrome P450 monooxygenase adrA catalyzes two sequential oxidation reactions of the C-23 methyl group, to generate the corresponding alcohol andrastin B, and aldehyde andrastin A. This Penicillium rubens (strain ATCC 28089 / DSM 1075 / NRRL 1951 / Wisconsin 54-1255) (Penicillium chrysogenum) protein is Terpene cyclase adrI.